Consider the following 655-residue polypeptide: MMKFTVVAAALLLLGAVRAEEEDKKEDVGTVVGIDLGTTYSCVGVFKNGRVEIIANDQGNRITPSYVAFTPEGERLIGDAAKNQLTSNPENTVFDAKRLIGRTWNDPSVQQDIKFLPFKVVEKKTKPYIQVDIGGGQTKTFAPEEISAMVLTKMKETAEAYLGKKVTHAVVTVPAYFNDAQRQATKDAGTIAGLNVMRIINEPTAAAIAYGLDKREGEKNILVFDLGGGTFDVSLLTIDNGVFEVVATNGDTHLGGEDFDQRVMEHFIKLYKKKTGKDVRKDNRAVQKLRREVEKAKRALSSQHQARIEIESFFEGEDFSETLTRAKFEELNMDLFRSTMKPVQKVLEDSDLKKSDIDEIVLVGGSTRIPKIQQLVKEFFNGKEPSRGINPDEAVAYGAAVQAGVLSGDQDTGDLVLLDVCPLTLGIETVGGVMTKLIPRNTVVPTKKSQIFSTASDNQPTVTIKVYEGERPLTKDNHLLGTFDLTGIPPAPRGVPQIEVTFEIDVNGILRVTAEDKGTGNKNKITITNDQNRLTPEEIERMVNDAEKFAEEDKKLKERIDTRNELESYAYSLKNQIGDKEKLGGKLSSEDKETMEKAVEEKIEWLESHQDADIEDFKAKKKELEEIVQPIISKLYGSGGPPPTGEEDTSEKDEL.

The N-terminal stretch at 1-19 (MMKFTVVAAALLLLGAVRA) is a signal peptide. A required for interaction with ELAPOR1 region spans residues 1-81 (MMKFTVVAAA…EGERLIGDAA (81 aa)). 37-40 (GTTY) contributes to the ATP binding site. Residue Ser87 is modified to Phosphoserine. Residue Lys97 coordinates ATP. N6-acetyllysine is present on Lys126. Residues 126 to 281 (KPYIQVDIGG…KKKTGKDVRK (156 aa)) are nucleotide-binding (NBD). Position 161 is a 3'-nitrotyrosine (Tyr161). Lys214 carries the post-translational modification N6-acetyllysine. 228-230 (GGT) lines the ATP pocket. Position 272 is an N6-acetyllysine (Lys272). Residue 294-301 (EKAKRALS) participates in ATP binding. Lys327 bears the N6-acetyllysine mark. Lys353 participates in a covalent cross-link: Glycyl lysine isopeptide (Lys-Gly) (interchain with G-Cter in SUMO2). Lys354 carries the N6-acetyllysine; alternate modification. Lys354 is covalently cross-linked (Glycyl lysine isopeptide (Lys-Gly) (interchain with G-Cter in SUMO1); alternate). Residue 365-368 (GSTR) participates in ATP binding. Residues 410–420 (QDTGDLVLLDV) form an interdomain linker region. The interval 421 to 501 (CPLTLGIETV…PRGVPQIEVT (81 aa)) is substrate-binding (SBD). Lys448 carries the post-translational modification N6-succinyllysine. Arg493 bears the Omega-N-methylarginine mark. Residue Thr519 is modified to O-AMP-threonine; alternate. Thr519 bears the Phosphothreonine; alternate mark. An N6,N6,N6-trimethyllysine; by METTL21A; in vitro modification is found at Lys586. Residue Lys586 is modified to N6,N6-dimethyllysine; alternate. Lys586 carries the N6-methyllysine; alternate modification. Lys592 carries the post-translational modification N6-methyllysine. The disordered stretch occupies residues 632–655 (ISKLYGSGGPPPTGEEDTSEKDEL). Thr644 and Thr649 each carry phosphothreonine. Over residues 645–655 (GEEDTSEKDEL) the composition is skewed to acidic residues. Ser650 is subject to Phosphoserine. The short motif at 652–655 (KDEL) is the Prevents secretion from ER element.

Belongs to the heat shock protein 70 family. As to quaternary structure, monomer and homooligomer; homooligomerization via the interdomain linker inactivates the chaperone activity and acts as a storage of HSPA5/BiP molecules. Interacts with DNAJC1 (via J domain). Component of an EIF2 complex at least composed of CELF1/CUGBP1, CALR, CALR3, EIF2S1, EIF2S2, HSP90B1 and HSPA5. Part of a large chaperone multiprotein complex comprising DNAJB11, HSP90B1, HSPA5, HYOU, PDIA2, PDIA4, PDIA6, PPIB, SDF2L1, UGGT1 and very small amounts of ERP29, but not, or at very low levels, CALR nor CANX. Interacts with TMEM132A and TRIM21. May form a complex with ERLEC1, OS9, SEL1L and SYVN1. Interacts with DNAJC10. Interacts with DNAJB9/ERdj4; leading to recruit HSPA5/BiP to ERN1/IRE1. Interacts with ERN1/IRE1 (via luminal domain); the interaction takes place following interaction with DNAJB9/ERdj4 and leads to inactivate ERN1/IRE1, the interaction also competitively inhibits ERN1 interaction with MANF. Interacts directly with MANF (via SAP domain); the interaction inhibits ATP binding to HSPA5/BiP and subsequent nucleotide exchange. Interacts with ERN1 (via luminal domain); the interaction competitively inhibits ERN1 interaction with MANF. Interacts with EIF2AK3/PERK (via luminal domain); interaction leads to inactivate EIF2AK3/PERK. Interacts with MX1. Interacts with METTL23. Interacts with CEMIP; the interaction induces calcium leakage from the endoplasmic reticulum and cell migration. Interacts with PCSK4 form; the interaction takes place in the endoplasmic reticulum. Interacts with CIPC. Interacts with CCDC88B (via C-terminus); the interaction opposes ERN1-mediated JNK activation, protecting against apoptosis. Interacts with INPP5K; necessary for INPP5K localization at the endoplasmic reticulum. Interacts with MANF; the interaction is direct. Interacts with LOXL2; leading to activate the ERN1/IRE1-XBP1 pathway of the unfolded protein response. Interacts with CLU under stressed condition; interaction increases CLU protein stability; facilitates its retrotranslocation and redistribution to the mitochondria; cooperatively suppress stress-induced apoptosis by stabilizing mitochondrial membrane integrity. Interacts with CCDC47. Interacts with CLN3. Interacts with ELAPOR1; may regulate the function of HSPA5 in apoptosis and cell proliferation. Interacts with CASP7. Interacts with ILDR2; the interaction stabilizes ILDR2 expression. Interacts with ADAM7. In terms of processing, in unstressed cells, AMPylation at Thr-519 by FICD inactivates the chaperome activity: AMPylated form is locked in a relatively inert state and only weakly stimulated by J domain-containing proteins. In response to endoplasmic reticulum stress, de-AMPylation by the same protein, FICD, restores the chaperone activity. Expressed in sperm (at protein level).

The protein resides in the endoplasmic reticulum lumen. It is found in the melanosome. It localises to the cytoplasm. Its subcellular location is the cell surface. It carries out the reaction ATP + H2O = ADP + phosphate + H(+). Its activity is regulated as follows. The chaperone activity is regulated by ATP-induced allosteric coupling of the nucleotide-binding (NBD) and substrate-binding (SBD) domains. In the ADP-bound and nucleotide-free (apo) states, the two domains have little interaction. In contrast, in the ATP-bound state the two domains are tightly coupled, which results in drastically accelerated kinetics in both binding and release of polypeptide substrates. J domain-containing co-chaperones (DNAJB9/ERdj4 or DNAJC10/ERdj5) stimulate the ATPase activity and are required for efficient substrate recognition by HSPA5/BiP. Homooligomerization inactivates participating HSPA5/BiP protomers and probably act as reservoirs to store HSPA5/BiP molecules when they are not needed by the cell. In terms of biological role, endoplasmic reticulum chaperone that plays a key role in protein folding and quality control in the endoplasmic reticulum lumen. Involved in the correct folding of proteins and degradation of misfolded proteins via its interaction with DNAJC10/ERdj5, probably to facilitate the release of DNAJC10/ERdj5 from its substrate. Acts as a key repressor of the EIF2AK3/PERK and ERN1/IRE1-mediated unfolded protein response (UPR). In the unstressed endoplasmic reticulum, recruited by DNAJB9/ERdj4 to the luminal region of ERN1/IRE1, leading to disrupt the dimerization of ERN1/IRE1, thereby inactivating ERN1/IRE1. Also binds and inactivates EIF2AK3/PERK in unstressed cells. Accumulation of misfolded protein in the endoplasmic reticulum causes release of HSPA5/BiP from ERN1/IRE1 and EIF2AK3/PERK, allowing their homodimerization and subsequent activation. Plays an auxiliary role in post-translational transport of small presecretory proteins across endoplasmic reticulum (ER). May function as an allosteric modulator for SEC61 channel-forming translocon complex, likely cooperating with SEC62 to enable the productive insertion of these precursors into SEC61 channel. Appears to specifically regulate translocation of precursors having inhibitory residues in their mature region that weaken channel gating. May also play a role in apoptosis and cell proliferation. This chain is Endoplasmic reticulum chaperone BiP, found in Mus musculus (Mouse).